The chain runs to 172 residues: Small ribosomal subunit protein uS4 (172 aa).

Positions 104-168 constitute an S4 RNA-binding domain; it reads RRLQTIVYRK…SPLAKMAQGG (65 aa).

Belongs to the universal ribosomal protein uS4 family. As to quaternary structure, part of the 30S ribosomal subunit. Contacts protein S5. The interaction surface between S4 and S5 is involved in control of translational fidelity.

Its function is as follows. One of the primary rRNA binding proteins, it binds directly to 16S rRNA where it nucleates assembly of the body of the 30S subunit. In terms of biological role, with S5 and S12 plays an important role in translational accuracy. In Thermofilum pendens (strain DSM 2475 / Hrk 5), this protein is Small ribosomal subunit protein uS4.